Reading from the N-terminus, the 1118-residue chain is Sodium-driven chloride bicarbonate exchanger (1118 aa).

Disordered regions lie at residues 1-23 (MEIK…EEAV) and 58-97 (GRKS…TPSQ). The Cytoplasmic segment spans residues 1-509 (MEIKDQGAQM…DFRDAFSLQC (509 aa)). Residues 59-76 (RKSHRRHRHRGHKHRKRD) are compositionally biased toward basic residues. Residues 77–90 (RERDSGLEDGRESP) are compositionally biased toward basic and acidic residues. Ser89 carries the post-translational modification Phosphoserine. At Thr94 the chain carries Phosphothreonine. His221 and His223 together coordinate Zn(2+). 2 disordered regions span residues 269 to 310 (AENK…KGPP) and 457 to 476 (NGTA…GPEL). Ser276 is modified (phosphoserine). A helical transmembrane segment spans residues 510–530 (LASFLFLYCACMSPVITFGGL). At 531–538 (LGEATEGR) the chain is on the extracellular side. The chain crosses the membrane as a helical span at residues 539 to 559 (ISAIESLFGASMTGIAYSLFG). Residues 560–562 (GQP) are Cytoplasmic-facing. The helical transmembrane segment at 563–583 (LTILGSTGPVLVFEKILFKFC) threads the bilayer. At 584–596 (KEYGLSYLSLRAS) the chain is on the extracellular side. Residues 597–617 (IGLWTATLCIILVATDASSLV) form a helical membrane-spanning segment. Topologically, residues 618 to 626 (CYITRFTEE) are cytoplasmic. Residues 627–647 (AFASLICIIFIYEALEKLFEL) form a helical membrane-spanning segment. The Extracellular segment spans residues 648-720 (SETYPINMHN…VGRACGHGHP (73 aa)). 3 N-linked (GlcNAc...) asparagine glycosylation sites follow: Asn677, Asn687, and Asn697. The helical transmembrane segment at 721–741 (YVPDVLFWSVILFFSTVTMSA) threads the bilayer. The Cytoplasmic portion of the chain corresponds to 742 to 762 (TLKQFKTSRYFPTKVRSIVSD). Residues 763-783 (FAVFLTILCMVLIDYAIGIPS) traverse the membrane as a helical segment. Over 784–809 (PKLQVPSVFKPTRDDRGWFVTPLGPN) the chain is Extracellular. The helical transmembrane segment at 810-830 (PWWTIIAAIIPALLCTILIFM) threads the bilayer. Over 831–855 (DQQITAVIINRKEHKLKKGCGYHLD) the chain is Cytoplasmic. A helical transmembrane segment spans residues 856-876 (LLMVAVMLGVCSIMGLPWFVA). Residues 877 to 912 (ATVLSITHVNSLKLESECSAPGEQPKFLGIREQRVT) are Extracellular-facing. The helical transmembrane segment at 913 to 933 (GLMIFILMGSSVFMTSILKFI) threads the bilayer. The Cytoplasmic segment spans residues 934-935 (PM). The helical transmembrane segment at 936–956 (PVLYGVFLYMGASSLKGIQLF) threads the bilayer. At 957–998 (DRIKLFWMPAKHQPDFIYLRHVPLRKVHLFTVIQMSCLGLLW) the chain is on the extracellular side. A helical membrane pass occupies residues 999 to 1019 (IIKVSRAAIVFPMMVLALVFV). Residues 1020 to 1118 (RKLMDFLFTK…SRFPSKSSPS (99 aa)) lie on the Cytoplasmic side of the membrane. A phosphoserine mark is found at Ser1057 and Ser1085.

Belongs to the anion exchanger (TC 2.A.31) family. In terms of processing, N-glycosylated. In the brain, detected in cerebral cortex, subcortex, cerebellum, hippocampus and medulla (at protein level). In the cerebrum, expressed at high levels throughout the cortex, at lower levels in striatum and not detectable in the corpus callosum (at protein level). In the cerebellum, detected at high levels in the molecular layer but at very low levels in the granular layer (at protein level). In the central nervous system, detected in neurons in the olfactory bulb, cortex and cerebellum (at protein level). Within the hippocampus, abundantly expressed in CA3 pyramidal cells (at protein level). Strongly expressed in the retina with high levels in bipolar and amacrine cells (at protein level). Expressed in the epithelial cells of the choroid plexus. During embryonic development, expressed in neurons of the central nervous system. Also expressed in the peripheral nervous system and in non-neuronal tissues such as the dura and some epithelia including the acid-secreting epithelium of the stomach and the duodenal epithelium. In the embryonic retina, expression is restricted to the neuronal cell layer and the retinal pigment epithelium. In terms of tissue distribution, expressed at high levels in brain and at low levels in the pituitary, testis, kidney and ileum. Also expressed in pancreatic islets.

It localises to the basolateral cell membrane. The protein resides in the apical cell membrane. Its subcellular location is the cell projection. It is found in the dendrite. The protein localises to the axon. It localises to the perikaryon. The protein resides in the presynapse. Its subcellular location is the postsynapse. The enzyme catalyses 2 hydrogencarbonate(out) + chloride(in) + Na(+)(out) = 2 hydrogencarbonate(in) + chloride(out) + Na(+)(in). Its activity is regulated as follows. Zinc-binding negatively regulates its activity. Functionally, sodium/bicarbonate cotransporter which plays an important role in regulating intracellular pH. Has been shown to act as a sodium/bicarbonate cotransporter in exchange for intracellular chloride. Has also been shown to act as a sodium/biocarbonate cotransporter which is not responsible for net efflux of chloride, with the observed chloride efflux being due to chloride self-exchange. Controls neuronal pH and may contribute to the secretion of cerebrospinal fluid. Acting on presynaptic intracellular pH, it promotes GABA release, reduces the excitability of CA1 pyramidal neurons, and modulates short-term synaptic plasticity. Required in retinal cells to maintain normal pH which is necessary for normal vision. In the kidney, likely to mediate bicarbonate reclamation in the apical membrane of the proximal tubules. Sodium/bicarbonate cotransporter which mediates cotransport of sodium and bicarbonate in association with an efflux of intracellular chloride. This chain is Sodium-driven chloride bicarbonate exchanger, found in Mus musculus (Mouse).